The following is a 377-amino-acid chain: Queuine tRNA-ribosyltransferase (377 aa).

Residue D94 is the Proton acceptor of the active site. Residues 94-98 (DSGGF), D148, Q191, and G218 each bind substrate. The RNA binding stretch occupies residues 249-255 (GVGTPDD). D268 serves as the catalytic Nucleophile. The tract at residues 273–277 (TRAGR) is RNA binding; important for wobble base 34 recognition.

Belongs to the queuine tRNA-ribosyltransferase family. Homodimer. Within each dimer, one monomer is responsible for RNA recognition and catalysis, while the other monomer binds to the replacement base PreQ1.

The catalysed reaction is 7-aminomethyl-7-carbaguanine + guanosine(34) in tRNA = 7-aminomethyl-7-carbaguanosine(34) in tRNA + guanine. The protein operates within tRNA modification; tRNA-queuosine biosynthesis. Functionally, catalyzes the base-exchange of a guanine (G) residue with the queuine precursor 7-aminomethyl-7-deazaguanine (PreQ1) at position 34 (anticodon wobble position) in tRNAs with GU(N) anticodons (tRNA-Asp, -Asn, -His and -Tyr). Catalysis occurs through a double-displacement mechanism. The nucleophile active site attacks the C1' of nucleotide 34 to detach the guanine base from the RNA, forming a covalent enzyme-RNA intermediate. The proton acceptor active site deprotonates the incoming PreQ1, allowing a nucleophilic attack on the C1' of the ribose to form the product. After dissociation, two additional enzymatic reactions on the tRNA convert PreQ1 to queuine (Q), resulting in the hypermodified nucleoside queuosine (7-(((4,5-cis-dihydroxy-2-cyclopenten-1-yl)amino)methyl)-7-deazaguanosine). The sequence is that of Queuine tRNA-ribosyltransferase from Brucella melitensis biotype 1 (strain ATCC 23456 / CCUG 17765 / NCTC 10094 / 16M).